We begin with the raw amino-acid sequence, 319 residues long: tRNA pseudouridine synthase B (319 aa).

Asp-47 serves as the catalytic Nucleophile.

Belongs to the pseudouridine synthase TruB family. Type 1 subfamily.

It carries out the reaction uridine(55) in tRNA = pseudouridine(55) in tRNA. Responsible for synthesis of pseudouridine from uracil-55 in the psi GC loop of transfer RNAs. The sequence is that of tRNA pseudouridine synthase B from Pseudoalteromonas translucida (strain TAC 125).